We begin with the raw amino-acid sequence, 539 residues long: Phosphoenolpyruvate carboxykinase (ATP) (539 aa).

Residues Arg64, Tyr206, and Lys212 each contribute to the substrate site. ATP is bound by residues Lys212, His231, and 247-255 (GLSGTGKTT). Mn(2+) contacts are provided by Lys212 and His231. Mn(2+) is bound at residue Asp268. ATP contacts are provided by residues Glu296, Arg332, 448–449 (RI), and Thr454. Arg332 contacts substrate.

This sequence belongs to the phosphoenolpyruvate carboxykinase (ATP) family. In terms of assembly, monomer. Mn(2+) serves as cofactor.

It localises to the cytoplasm. The catalysed reaction is oxaloacetate + ATP = phosphoenolpyruvate + ADP + CO2. It functions in the pathway carbohydrate biosynthesis; gluconeogenesis. In terms of biological role, involved in the gluconeogenesis. Catalyzes the conversion of oxaloacetate (OAA) to phosphoenolpyruvate (PEP) through direct phosphoryl transfer between the nucleoside triphosphate and OAA. This is Phosphoenolpyruvate carboxykinase (ATP) from Cronobacter sakazakii (strain ATCC BAA-894) (Enterobacter sakazakii).